The chain runs to 154 residues: Ribosome maturation factor RimP (154 aa).

The protein belongs to the RimP family.

The protein localises to the cytoplasm. Functionally, required for maturation of 30S ribosomal subunits. This is Ribosome maturation factor RimP from Hydrogenobaculum sp. (strain Y04AAS1).